A 78-amino-acid chain; its full sequence is Nucleocapsid VP1 (78 aa).

As to quaternary structure, homodimer.

The protein localises to the virion. Completely wraps the viral circular dsDNA genome to form a nucleoprotein filament. These interactions between the viral genome and the nucleocapsid proteins probably maintain the DNA in A-form. This certainly protects the viral DNA under conditions such as the extreme desiccation of its host. The chain is Nucleocapsid VP1 from Sulfolobus (SPV1).